The primary structure comprises 228 residues: Lipoprotein-releasing system ATP-binding protein LolD (228 aa).

In terms of domain architecture, ABC transporter spans 8 to 228; that stretch reads LQAKKLVKAY…ELHDGLLRRL (221 aa). 44–51 serves as a coordination point for ATP; that stretch reads GASGSGKS.

It belongs to the ABC transporter superfamily. Lipoprotein translocase (TC 3.A.1.125) family. The complex is composed of two ATP-binding proteins (LolD) and two transmembrane proteins (LolC and LolE).

It localises to the cell inner membrane. Functionally, part of the ABC transporter complex LolCDE involved in the translocation of mature outer membrane-directed lipoproteins, from the inner membrane to the periplasmic chaperone, LolA. Responsible for the formation of the LolA-lipoprotein complex in an ATP-dependent manner. This Alcanivorax borkumensis (strain ATCC 700651 / DSM 11573 / NCIMB 13689 / SK2) protein is Lipoprotein-releasing system ATP-binding protein LolD.